The chain runs to 490 residues: Betaine aldehyde dehydrogenase (490 aa).

3 residues coordinate K(+): threonine 26, isoleucine 27, and aspartate 93. Position 150–152 (150–152 (GAW)) interacts with NAD(+). The active-site Charge relay system is the lysine 162. Position 176-179 (176-179 (KPSE)) interacts with NAD(+). Valine 180 is a K(+) binding site. Position 230-233 (230-233 (GVAS)) interacts with NAD(+). Leucine 246 lines the K(+) pocket. Glutamate 252 (proton acceptor) is an active-site residue. Residues glycine 254, cysteine 286, and glutamate 387 each contribute to the NAD(+) site. Cysteine 286 acts as the Nucleophile in catalysis. At cysteine 286 the chain carries Cysteine sulfenic acid (-SOH). Lysine 457 and glycine 460 together coordinate K(+). Glutamate 464 serves as the catalytic Charge relay system.

It belongs to the aldehyde dehydrogenase family. Dimer of dimers. K(+) serves as cofactor.

The enzyme catalyses betaine aldehyde + NAD(+) + H2O = glycine betaine + NADH + 2 H(+). The protein operates within amine and polyamine biosynthesis; betaine biosynthesis via choline pathway; betaine from betaine aldehyde: step 1/1. In terms of biological role, involved in the biosynthesis of the osmoprotectant glycine betaine. Catalyzes the irreversible oxidation of betaine aldehyde to the corresponding acid. The protein is Betaine aldehyde dehydrogenase of Escherichia coli O6:K15:H31 (strain 536 / UPEC).